The following is a 708-amino-acid chain: Ubiquitin thioesterase ZRANB1 (708 aa).

A RanBP2-type 1 zinc finger spans residues 3–33 (ERGIKWACEYCTYENWPSAIKCTMCRAQRPS). 4 residues coordinate Zn(2+): Cys10, Cys13, Cys24, and Cys27. The disordered stretch occupies residues 38 to 73 (TEDPFKSGSSDVGRDWDPSSTEGGSSPLICPDSSAR). 2 RanBP2-type zinc fingers span residues 84–113 (NANK…QRRT) and 149–178 (RTQH…PRPN). The Zn(2+) site is built by Cys90, Cys93, Cys104, Cys107, Cys155, Cys158, Cys169, and Cys172. Residues 200–223 (RARWRGSCSSGNSQRRSPPTMKRD) are disordered. Over residues 206-216 (SCSSGNSQRRS) the composition is skewed to polar residues. ANK repeat units follow at residues 260 to 290 (KKTD…SGGD) and 313 to 340 (YTLV…QQAA). The region spanning 432 to 592 (LYALWNRTAG…RGHFSALVAM (161 aa)) is the OTU domain. The Nucleophile role is filled by Cys443. His585 (proton acceptor) is an active-site residue.

Belongs to the peptidase C64 family. As to quaternary structure, interacts with TRAF6. Interacts with APC.

Its subcellular location is the cytoplasm. The protein resides in the nucleus. It carries out the reaction Thiol-dependent hydrolysis of ester, thioester, amide, peptide and isopeptide bonds formed by the C-terminal Gly of ubiquitin (a 76-residue protein attached to proteins as an intracellular targeting signal).. In terms of biological role, ubiquitin thioesterase, which specifically hydrolyzes 'Lys-29'-linked and 'Lys-33'-linked diubiquitin. Also cleaves 'Lys-63'-linked chains, but with 40-fold less efficiency compared to 'Lys-29'-linked ones. Positive regulator of the Wnt signaling pathway that deubiquitinates APC protein, a negative regulator of Wnt-mediated transcription. Acts as a regulator of autophagy by mediating deubiquitination of PIK3C3/VPS34, thereby promoting autophagosome maturation. Plays a role in the regulation of cell morphology and cytoskeletal organization. Required in the stress fiber dynamics and cell migration. This Bos taurus (Bovine) protein is Ubiquitin thioesterase ZRANB1.